We begin with the raw amino-acid sequence, 415 residues long: Tyrosine--tRNA ligase (415 aa).

Y34 is a binding site for L-tyrosine. Residues P39–H48 carry the 'HIGH' region motif. L-tyrosine-binding residues include Y164 and Q168. Positions K226–S230 match the 'KMSKS' region motif. K229 lines the ATP pocket. The 68-residue stretch at K348–K415 folds into the S4 RNA-binding domain.

It belongs to the class-I aminoacyl-tRNA synthetase family. TyrS type 1 subfamily. Homodimer.

The protein localises to the cytoplasm. The catalysed reaction is tRNA(Tyr) + L-tyrosine + ATP = L-tyrosyl-tRNA(Tyr) + AMP + diphosphate + H(+). In terms of biological role, catalyzes the attachment of tyrosine to tRNA(Tyr) in a two-step reaction: tyrosine is first activated by ATP to form Tyr-AMP and then transferred to the acceptor end of tRNA(Tyr). The protein is Tyrosine--tRNA ligase of Leuconostoc citreum (strain KM20).